Here is a 259-residue protein sequence, read N- to C-terminus: Thiazole synthase (259 aa).

Catalysis depends on K95, which acts as the Schiff-base intermediate with DXP. Residues G156, 182 to 183, and 204 to 205 each bind 1-deoxy-D-xylulose 5-phosphate; these read AG and NT.

It belongs to the ThiG family. In terms of assembly, homotetramer. Forms heterodimers with either ThiH or ThiS.

The protein localises to the cytoplasm. It catalyses the reaction [ThiS sulfur-carrier protein]-C-terminal-Gly-aminoethanethioate + 2-iminoacetate + 1-deoxy-D-xylulose 5-phosphate = [ThiS sulfur-carrier protein]-C-terminal Gly-Gly + 2-[(2R,5Z)-2-carboxy-4-methylthiazol-5(2H)-ylidene]ethyl phosphate + 2 H2O + H(+). It functions in the pathway cofactor biosynthesis; thiamine diphosphate biosynthesis. Catalyzes the rearrangement of 1-deoxy-D-xylulose 5-phosphate (DXP) to produce the thiazole phosphate moiety of thiamine. Sulfur is provided by the thiocarboxylate moiety of the carrier protein ThiS. In vitro, sulfur can be provided by H(2)S. The protein is Thiazole synthase of Proteus mirabilis (strain HI4320).